The following is a 440-amino-acid chain: MDRYQRKIGCFIQIPNLGRGQLKYVGPVDTKAGMFAGVDLLANIGKNDGSFMGKKYFQTEYPQSGLFIQLQKVASLIEKASISQTSRRTTMEPLSIPKNRSIVRLTNQFSPMDDPKSPTPMRSFRITSRHSGNQQSMDQEASDHHQQQEFGYDNREDRMEVDSILSSDRKANHNTTSDWKPDNGHMNDLNSSEVTIELREAQLTIEKLQRKQLHYKRLLDDQRMVLEEVQPTFDRYEATIQEREKEIDHLKQQLELERRQQAKQKQFFDAENEQLLAVVSQLHEEIKENEERNLSHNQPTGANEDVELLKKQLEQLRNIEDQFELHKTKWAKEREQLKMHNDSLSKEYQNLSKELFLTKPQDSSSEEVASLTKKLEEANEKIKQLEQAQAQTAVESLPIFDPPAPVDTTAGRQQWCEHCDTMGHNTAECPHHNPDNQQFF.

Positions 26–69 constitute a CAP-Gly domain; the sequence is GPVDTKAGMFAGVDLLANIGKNDGSFMGKKYFQTEYPQSGLFIQ. Phosphoserine is present on residues S95 and S110. A disordered region spans residues 108–157; the sequence is QFSPMDDPKSPTPMRSFRITSRHSGNQQSMDQEASDHHQQQEFGYDNRED. Polar residues predominate over residues 125-139; the sequence is RITSRHSGNQQSMDQ. The segment covering 141–157 has biased composition (basic and acidic residues); that stretch reads ASDHHQQQEFGYDNRED. The stretch at 190–397 forms a coiled coil; it reads NSSEVTIELR…AQAQTAVESL (208 aa). The CCHC-box motif lies at 416–429; that stretch reads CEHCDTMGHNTAEC.

It localises to the cytoplasm. Its subcellular location is the cytoskeleton. The protein resides in the microtubule organizing center. The protein localises to the spindle pole body. It is found in the spindle. Its function is as follows. Required for nuclear fusion, chromosome disjunction, and nuclear segregation during mitosis. Probably required for the formation or stabilization of microtubules during mitosis and for spindle pole body fusion during conjugation. The protein is Nuclear fusion protein BIK1 (BIK1) of Saccharomyces cerevisiae (strain ATCC 204508 / S288c) (Baker's yeast).